The sequence spans 450 residues: Glucose-6-phosphate isomerase (450 aa).

The residue at position 39 (T39) is a Phosphothreonine. E291 acts as the Proton donor in catalysis. Catalysis depends on residues H312 and K426.

It belongs to the GPI family.

The protein resides in the cytoplasm. The enzyme catalyses alpha-D-glucose 6-phosphate = beta-D-fructose 6-phosphate. Its pathway is carbohydrate biosynthesis; gluconeogenesis. It participates in carbohydrate degradation; glycolysis; D-glyceraldehyde 3-phosphate and glycerone phosphate from D-glucose: step 2/4. In terms of biological role, catalyzes the reversible isomerization of glucose-6-phosphate to fructose-6-phosphate. The sequence is that of Glucose-6-phosphate isomerase from Bacillus mycoides (strain KBAB4) (Bacillus weihenstephanensis).